A 623-amino-acid polypeptide reads, in one-letter code: Kelch repeat and BTB domain-containing protein 2 (623 aa).

Residues 31–98 form the BTB domain; sequence TDIVLIVEGT…AYTGNLAMND (68 aa). In terms of domain architecture, BACK spans 133–229; the sequence is CVRLLSFADL…IRIDALSEVT (97 aa). Position 300 is a phosphoserine (S300). 5 Kelch repeats span residues 317–380, 381–429, 431–469, 470–529, and 535–581; these read DIYI…CCEG, HIYA…VVHD, IYVM…AFGD, KIFY…RAVV, and CVFM…DFRC.

Component of the BCR(KBTBD2) E3 ubiquitin ligase complex, at least composed of CUL3, KBTBD2 and RBX1. Interacts (via the BTB domain) with CUL3.

The protein operates within protein modification; protein ubiquitination. Its function is as follows. Substrate-specific adapter of a BCR (BTB-CUL3-RBX1) E3 ubiquitin ligase complex that acts as a regulator of the insulin signaling pathway, modulating insulin sensitivity by limiting PIK3R1/p85alpha abundance in adipocytes. Targets PIK3R1, the regulatory subunit of phosphatidylinositol 3-kinase (PI3K), for 'Lys-48'-linked polyubiquitination and proteasome-mediated degradation. This chain is Kelch repeat and BTB domain-containing protein 2 (KBTBD2), found in Pongo abelii (Sumatran orangutan).